Here is a 127-residue protein sequence, read N- to C-terminus: Large ribosomal subunit protein bL19 (127 aa).

It belongs to the bacterial ribosomal protein bL19 family.

In terms of biological role, this protein is located at the 30S-50S ribosomal subunit interface and may play a role in the structure and function of the aminoacyl-tRNA binding site. The polypeptide is Large ribosomal subunit protein bL19 (Bradyrhizobium sp. (strain BTAi1 / ATCC BAA-1182)).